The following is an 841-amino-acid chain: Chitin synthase 1 (841 aa).

Residues 1–13 (MNPGQKQEHDQYP) are compositionally biased toward basic and acidic residues. The segment at 1–98 (MNPGQKQEHD…YGEAPRRQPR (98 aa)) is disordered. Positions 76-85 (PPQPMGPPSP) are enriched in pro residues. The next 9 helical transmembrane spans lie at 302–322 (WFFQAFGPVINPNVCVLIDVG), 385–405 (SVFGYISVLPGAFSAYRFTAL), 526–546 (LIFSWFALGNFYLTFYILTSA), 564–584 (ILHTILNYIYILLIIVQFILA), 602–622 (FFAILMVYMMFATIWITVVGV), 644–664 (NIIISIVSTYAMYFIASFLFF), 673–693 (FIQYIFLSPSYTNILNIYAFC), 778–798 (VISWIISNLILVVLITNENIL), and 816–836 (LWSVAGLSAIRFCGSGLYLIF).

It belongs to the chitin synthase family.

It localises to the cell membrane. It catalyses the reaction [(1-&gt;4)-N-acetyl-beta-D-glucosaminyl](n) + UDP-N-acetyl-alpha-D-glucosamine = [(1-&gt;4)-N-acetyl-beta-D-glucosaminyl](n+1) + UDP + H(+). Polymerizes chitin, a structural polymer of the cell wall and septum, by transferring the sugar moiety of UDP-GlcNAc to the non-reducing end of the growing chitin polymer. This chain is Chitin synthase 1 (chs1), found in Phycomyces blakesleeanus (strain ATCC 8743b / DSM 1359 / FGSC 10004 / NBRC 33097 / NRRL 1555).